Here is a 344-residue protein sequence, read N- to C-terminus: Phenylalanine--tRNA ligase alpha subunit (344 aa).

Glu-256 serves as a coordination point for Mg(2+).

It belongs to the class-II aminoacyl-tRNA synthetase family. Phe-tRNA synthetase alpha subunit type 1 subfamily. As to quaternary structure, tetramer of two alpha and two beta subunits. Mg(2+) is required as a cofactor.

The protein resides in the cytoplasm. It catalyses the reaction tRNA(Phe) + L-phenylalanine + ATP = L-phenylalanyl-tRNA(Phe) + AMP + diphosphate + H(+). This is Phenylalanine--tRNA ligase alpha subunit from Geobacillus kaustophilus (strain HTA426).